We begin with the raw amino-acid sequence, 299 residues long: Coenzyme PQQ synthesis protein B (299 aa).

Belongs to the PqqB family.

The protein operates within cofactor biosynthesis; pyrroloquinoline quinone biosynthesis. May be involved in the transport of PQQ or its precursor to the periplasm. This is Coenzyme PQQ synthesis protein B from Methylobacterium radiotolerans (strain ATCC 27329 / DSM 1819 / JCM 2831 / NBRC 15690 / NCIMB 10815 / 0-1).